The chain runs to 2543 residues: Highly reducing polyketide synthase PKS2 (2543 aa).

The Ketosynthase family 3 (KS3) domain maps to 4 to 425; it reads EPRIAVIGLS…GSNSAILLEG (422 aa). Residues C174, H309, and H349 each act as for beta-ketoacyl synthase activity in the active site. The segment at 573–902 is malonyl-CoA:ACP transacylase (MAT) domain; that stretch reads VFTGQGAQHA…TYLPTLFRGT (330 aa). The active-site For malonyltransferase activity is S662. The segment at 969-1101 is N-terminal hotdog fold; sequence HPLLGRKISP…GQIEAEMTDM (133 aa). Positions 969-1281 constitute a PKS/mFAS DH domain; it reads HPLLGRKISP…FRNIGSAEEV (313 aa). Residues 969–1283 are dehydratase (DH) domain; it reads HPLLGRKISP…NIGSAEEVID (315 aa). H1001 functions as the Proton acceptor; for dehydratase activity in the catalytic mechanism. A C-terminal hotdog fold region spans residues 1119-1281; it reads TGLKEHDINA…FRNIGSAEEV (163 aa). D1188 (proton donor; for dehydratase activity) is an active-site residue. The tract at residues 1438-1631 is methyltransferase (CMet) domain; the sequence is SKVLGYLTEY…LPSRYGTDKP (194 aa). The interval 1847–2159 is enoylreductase (ER) domain; that stretch reads GSPDTIYFQR…SGEHMGKMVI (313 aa). The interval 2184–2359 is ketoreductase (KR) domain; that stretch reads ATYLVAGGTR…YTVSIALPVV (176 aa). In terms of domain architecture, Carrier spans 2463–2540; that stretch reads DPLIGLTEAM…ALATEILSQR (78 aa). Residue S2500 is modified to O-(pantetheine 4'-phosphoryl)serine.

The protein operates within secondary metabolite biosynthesis. Its function is as follows. Highly reducing polyketide synthase; part of the gene cluster that mediates the biosynthesis of phomenoic acid, a long chain aliphatic carboxylic acid that does not appear to be essential for pathogenicity but may play a role in allowing to outcompete other fungi in the environmental niche via its antifungal properties. The polyketide synthase produces the long methylated aliphatic carboxylic acid chain of phomenoic acid. The cluster-specific cytochrome P450 monooxygenase may then hydroxylate the methyl group of carbon 31. The putative dehydrogenase YogA, which has no obvious role in phomenoic acid biosynthesis, may further modify phomenoic acid to produce a compound not identified yet. The chain is Highly reducing polyketide synthase PKS2 from Leptosphaeria maculans (strain JN3 / isolate v23.1.3 / race Av1-4-5-6-7-8) (Blackleg fungus).